We begin with the raw amino-acid sequence, 335 residues long: Probable cytosolic iron-sulfur protein assembly protein Ciao1 (335 aa).

7 WD repeats span residues Gly12–Lys51, Gly57–Asn96, Gly101–Cys140, Pro146–Asp185, Ser192–Gly231, Gln250–Glu289, and Ala301–Asp335.

The protein belongs to the WD repeat CIA1 family.

Its function is as follows. Essential component of the cytosolic iron-sulfur (Fe/S) protein assembly machinery. Required for the maturation of extramitochondrial Fe/S proteins. The chain is Probable cytosolic iron-sulfur protein assembly protein Ciao1 from Drosophila willistoni (Fruit fly).